The primary structure comprises 489 residues: MFS-type transporter MFS19 (489 aa).

The segment covering 1–12 (MAHSTAGDRDPE) has biased composition (basic and acidic residues). The interval 1-42 (MAHSTAGDRDPEVGSEQHSSIAQLHTESMSDPWGDSNSPENP) is disordered. The span at 16 to 41 (EQHSSIAQLHTESMSDPWGDSNSPEN) shows a compositional bias: polar residues. A helical membrane pass occupies residues 52-72 (FHVAIVSIFTLTANLAATMFA). 2 N-linked (GlcNAc...) asparagine glycosylation sites follow: Asn-83 and Asn-86. 11 consecutive transmembrane segments (helical) span residues 91–111 (AMTV…LAPL), 127–147 (VYIA…FLVF), 149–169 (FLCG…VADI), 180–200 (ALFA…GGYV), 208–228 (WTFR…MFFM), 282–302 (PIVL…FLLF), 321–341 (GLAY…FSIL), 361–381 (LILM…YGWS), 388–408 (WIVP…VVIP), 425–445 (ALAA…LVAA), and 454–474 (GWGN…PWLF).

This sequence belongs to the major facilitator superfamily.

Its subcellular location is the cell membrane. MFS-type efflux pump involved in the modulation susceptibility to various compounds including cumyl hydroperoxide, potassium superoxide, many singlet oxygen-generating compounds (eosin Y, rose Bengal, hematoporphyrin, methylene blue, and cercosporin), and the cell wall biosynthesis inhibitor Congo red. Involved in oxidative stress tolerance, colonization, and lesion formation. This is MFS-type transporter MFS19 from Alternaria alternata (Alternaria rot fungus).